A 324-amino-acid polypeptide reads, in one-letter code: Deoxyhypusine hydroxylase (324 aa).

2 HEAT-like PBS-type repeats span residues 60–86 and 94–119; these read LKHE…VLED and RHEA…YLHR. Positions 62, 63, 95, and 96 each coordinate Fe cation. The span at 143–152 shows a compositional bias: basic and acidic residues; sequence EERKQEKLRQ. The disordered stretch occupies residues 143–171; the sequence is EERKQEKLRQSDFASVDPAPPMPEDDEKQ. 3 HEAT-like PBS-type repeats span residues 189–219, 227–253, and 260–287; these read KRYR…LAKG, FRHE…ALSN, and VRHE…FLHD. Positions 229, 230, 262, and 263 each coordinate Fe cation.

Belongs to the deoxyhypusine hydroxylase family. The cofactor is Fe(2+).

Its subcellular location is the cytoplasm. The protein localises to the nucleus. It carries out the reaction [eIF5A protein]-deoxyhypusine + AH2 + O2 = [eIF5A protein]-hypusine + A + H2O. It participates in protein modification; eIF5A hypusination. In terms of biological role, catalyzes the hydroxylation of the N(6)-(4-aminobutyl)-L-lysine intermediate to form hypusine, an essential post-translational modification only found in mature eIF-5A factor. This is Deoxyhypusine hydroxylase (lia1) from Neurospora crassa (strain ATCC 24698 / 74-OR23-1A / CBS 708.71 / DSM 1257 / FGSC 987).